The chain runs to 290 residues: Tubulin polyglutamylase complex subunit 1 (290 aa).

The segment at 1 to 30 (MAAVEKRRQAVPPPAGFTDSGRQSVSRAAG) is disordered. A phosphoserine mark is found at serine 34 and serine 266.

In terms of assembly, part of the neuronal tubulin polyglutamylase complex which contains TPGS1, TPGS2, TTLL1, LRRC49 and NICN1. Interacts with PCM1, CSTPP1 and LRRC49.

It localises to the cytoplasm. The protein resides in the cytoskeleton. Its subcellular location is the cilium axoneme. It is found in the flagellum axoneme. The protein localises to the cilium basal body. It localises to the flagellum basal body. The protein resides in the cell projection. Its subcellular location is the axon. It is found in the dendrite. The protein localises to the microtubule organizing center. It localises to the centrosome. The protein resides in the centriolar satellite. In terms of biological role, subunit of the tubulin polyglutamylase complex (TPGC). The complex mediates cilia and flagella polyglutamylation which is essential for their biogenesis and motility. May act in the targeting of the tubulin polyglutamylase complex. Required for the development of the spermatid flagellum. The sequence is that of Tubulin polyglutamylase complex subunit 1 from Homo sapiens (Human).